A 352-amino-acid polypeptide reads, in one-letter code: Putative formin-like protein 15b (352 aa).

Residues 1 to 350 (MTLFNFIKLF…KDAKEAEMEK (350 aa)) form the FH2 domain.

This sequence belongs to the formin-like family. Class-II subfamily.

In Arabidopsis thaliana (Mouse-ear cress), this protein is Putative formin-like protein 15b (FH15B).